The sequence spans 603 residues: DNA mismatch repair protein MutL (603 aa).

Positions 336 to 346 are enriched in basic and acidic residues; sequence EVSKKQKEQQK. Residues 336 to 372 form a disordered region; sequence EVSKKQKEQQKSEQIQMSFEENRQPKEPPTLFSKPNI.

Belongs to the DNA mismatch repair MutL/HexB family.

Its function is as follows. This protein is involved in the repair of mismatches in DNA. It is required for dam-dependent methyl-directed DNA mismatch repair. May act as a 'molecular matchmaker', a protein that promotes the formation of a stable complex between two or more DNA-binding proteins in an ATP-dependent manner without itself being part of a final effector complex. The chain is DNA mismatch repair protein MutL from Listeria innocua serovar 6a (strain ATCC BAA-680 / CLIP 11262).